We begin with the raw amino-acid sequence, 328 residues long: Palmitoyltransferase ZDHHC15A (328 aa).

At 1 to 14 (MLLPACLRRCARLL) the chain is on the cytoplasmic side. The helical transmembrane segment at 15–35 (FWIPVLVVIVVVMWSYYAYVV) threads the bilayer. Residues 36–48 (HFCWILLSSATQR) lie on the Lumenal side of the membrane. A helical transmembrane segment spans residues 49–69 (VVFLCLFHLCFGMFSWSFWKA). Over 70-166 (VSTPPSSPSV…NNCMGFSNYK (97 aa)) the chain is Cytoplasmic. The DHHC domain occupies 123–173 (RFCHHCQLIKPDRCHHCSVCQTCVLKMDHHCLWLNNCMGFSNYKFFMLFLL). Zn(2+)-binding residues include cysteine 125 and cysteine 128. Lysine 132 contributes to the substrate binding site. Histidine 138, cysteine 139, cysteine 142, cysteine 145, and histidine 152 together coordinate Zn(2+). Catalysis depends on cysteine 153, which acts as the S-palmitoyl cysteine intermediate. A Zn(2+)-binding site is contributed by cysteine 159. A helical transmembrane segment spans residues 167–187 (FFMLFLLYSLLYCLLIVSTVT). At 188–206 (PTVIQLWRGRLFDSCVKLH) the chain is on the lumenal side. The chain crosses the membrane as a helical span at residues 207 to 227 (VLFLTLVSAIFAITLCFLLIF). Over 228-328 (HIWLLTSNKT…KEAAVTIAVD (101 aa)) the chain is Cytoplasmic.

This sequence belongs to the DHHC palmitoyltransferase family. In terms of processing, autopalmitoylated (in vitro).

The protein localises to the golgi apparatus membrane. It is found in the postsynaptic density. The catalysed reaction is L-cysteinyl-[protein] + hexadecanoyl-CoA = S-hexadecanoyl-L-cysteinyl-[protein] + CoA. The enzyme catalyses L-cysteinyl-[protein] + tetradecanoyl-CoA = S-tetradecanoyl-L-cysteinyl-[protein] + CoA. It carries out the reaction L-cysteinyl-[protein] + octadecanoyl-CoA = S-octadecanoyl-L-cysteinyl-[protein] + CoA. Functionally, palmitoyltransferase that catalyzes the addition of palmitate onto various protein substrates. Has no stringent fatty acid selectivity and in addition to palmitate can also transfer onto target proteins myristate from tetradecanoyl-CoA and stearate from octadecanoyl-CoA. May thereby regulate target proteins association and localization to membranes. The chain is Palmitoyltransferase ZDHHC15A (zdhhc15a) from Danio rerio (Zebrafish).